Here is a 327-residue protein sequence, read N- to C-terminus: Lipoyl synthase (327 aa).

Residues Cys-75, Cys-80, Cys-86, Cys-101, Cys-105, Cys-108, and Ser-315 each coordinate [4Fe-4S] cluster. The Radical SAM core domain maps to 87-304 (FGNGTATFMI…EEEAYKMGFS (218 aa)).

This sequence belongs to the radical SAM superfamily. Lipoyl synthase family. [4Fe-4S] cluster is required as a cofactor.

It localises to the cytoplasm. It catalyses the reaction [[Fe-S] cluster scaffold protein carrying a second [4Fe-4S](2+) cluster] + N(6)-octanoyl-L-lysyl-[protein] + 2 oxidized [2Fe-2S]-[ferredoxin] + 2 S-adenosyl-L-methionine + 4 H(+) = [[Fe-S] cluster scaffold protein] + N(6)-[(R)-dihydrolipoyl]-L-lysyl-[protein] + 4 Fe(3+) + 2 hydrogen sulfide + 2 5'-deoxyadenosine + 2 L-methionine + 2 reduced [2Fe-2S]-[ferredoxin]. It participates in protein modification; protein lipoylation via endogenous pathway; protein N(6)-(lipoyl)lysine from octanoyl-[acyl-carrier-protein]: step 2/2. Its function is as follows. Catalyzes the radical-mediated insertion of two sulfur atoms into the C-6 and C-8 positions of the octanoyl moiety bound to the lipoyl domains of lipoate-dependent enzymes, thereby converting the octanoylated domains into lipoylated derivatives. This Variovorax paradoxus (strain S110) protein is Lipoyl synthase.